The following is a 285-amino-acid chain: Bifunctional protein FolD (285 aa).

NADP(+) is bound by residues 164 to 166 (GAS), Ile189, and Ile230.

Belongs to the tetrahydrofolate dehydrogenase/cyclohydrolase family. As to quaternary structure, homodimer.

It carries out the reaction (6R)-5,10-methylene-5,6,7,8-tetrahydrofolate + NADP(+) = (6R)-5,10-methenyltetrahydrofolate + NADPH. The catalysed reaction is (6R)-5,10-methenyltetrahydrofolate + H2O = (6R)-10-formyltetrahydrofolate + H(+). It participates in one-carbon metabolism; tetrahydrofolate interconversion. In terms of biological role, catalyzes the oxidation of 5,10-methylenetetrahydrofolate to 5,10-methenyltetrahydrofolate and then the hydrolysis of 5,10-methenyltetrahydrofolate to 10-formyltetrahydrofolate. The polypeptide is Bifunctional protein FolD (Sulfurimonas denitrificans (strain ATCC 33889 / DSM 1251) (Thiomicrospira denitrificans (strain ATCC 33889 / DSM 1251))).